The sequence spans 841 residues: Probable alpha-glucuronidase A (841 aa).

Positions 1 to 20 (MRGLNLFQLILALLLSMVAA) are cleaved as a signal peptide. N-linked (GlcNAc...) asparagine glycosylation is found at asparagine 51, asparagine 76, asparagine 85, asparagine 149, asparagine 222, asparagine 279, asparagine 310, asparagine 343, asparagine 450, asparagine 465, asparagine 527, asparagine 576, asparagine 682, asparagine 723, and asparagine 732.

Belongs to the glycosyl hydrolase 67 family.

It localises to the secreted. The enzyme catalyses an alpha-D-glucuronoside + H2O = D-glucuronate + an alcohol. Functionally, alpha-glucuronidase involved in the hydrolysis of xylan, a major structural heterogeneous polysaccharide found in plant biomass representing the second most abundant polysaccharide in the biosphere, after cellulose. Releases 4-O-methylglucuronic acid from xylan. The sequence is that of Probable alpha-glucuronidase A (aguA) from Aspergillus niger.